Reading from the N-terminus, the 50-residue chain is Small ribosomal subunit protein eS31 (50 aa).

Cys-22, Cys-25, Cys-40, and Cys-43 together coordinate Zn(2+). A C4-type zinc finger spans residues 22–43 (CPRCGPGVFMADHGDRWACGKC).

It belongs to the eukaryotic ribosomal protein eS31 family. Part of the 30S ribosomal subunit. Zn(2+) is required as a cofactor.

This Pyrococcus furiosus (strain ATCC 43587 / DSM 3638 / JCM 8422 / Vc1) protein is Small ribosomal subunit protein eS31.